We begin with the raw amino-acid sequence, 63 residues long: Large ribosomal subunit protein uL29 (63 aa).

The protein belongs to the universal ribosomal protein uL29 family.

In Yersinia enterocolitica serotype O:8 / biotype 1B (strain NCTC 13174 / 8081), this protein is Large ribosomal subunit protein uL29.